Reading from the N-terminus, the 101-residue chain is Small ribosomal subunit protein uS14 (101 aa).

It belongs to the universal ribosomal protein uS14 family. As to quaternary structure, part of the 30S ribosomal subunit. Contacts proteins S3 and S10.

In terms of biological role, binds 16S rRNA, required for the assembly of 30S particles and may also be responsible for determining the conformation of the 16S rRNA at the A site. This is Small ribosomal subunit protein uS14 from Shewanella sp. (strain ANA-3).